We begin with the raw amino-acid sequence, 669 residues long: Dymeclin (669 aa).

A lipid anchor (N-myristoyl glycine) is attached at G2.

This sequence belongs to the dymeclin family. In terms of assembly, interacts with GOLM1 and PPIB. In terms of processing, myristoylated in vitro; myristoylation is not essential for protein targeting to Golgi compartment.

The protein resides in the cytoplasm. It is found in the golgi apparatus. The protein localises to the membrane. Functionally, necessary for correct organization of Golgi apparatus. Involved in bone development. This is Dymeclin (Dym) from Mus musculus (Mouse).